An 84-amino-acid polypeptide reads, in one-letter code: Cell division topological specificity factor (84 aa).

The protein belongs to the MinE family.

Its function is as follows. Prevents the cell division inhibition by proteins MinC and MinD at internal division sites while permitting inhibition at polar sites. This ensures cell division at the proper site by restricting the formation of a division septum at the midpoint of the long axis of the cell. In Ectopseudomonas mendocina (strain ymp) (Pseudomonas mendocina), this protein is Cell division topological specificity factor.